Consider the following 201-residue polypeptide: Probable GTP-binding protein EngB (201 aa).

An EngB-type G domain is found at 22–195 (SLPEIAFCGR…MEQLEMILKY (174 aa)). Residues 30–37 (GRSNVGKS), 57–61 (GKTRT), 75–78 (DLPG), 142–145 (TKLD), and 174–176 (YSS) each bind GTP. Mg(2+)-binding residues include Ser-37 and Thr-59.

The protein belongs to the TRAFAC class TrmE-Era-EngA-EngB-Septin-like GTPase superfamily. EngB GTPase family. Requires Mg(2+) as cofactor.

Necessary for normal cell division and for the maintenance of normal septation. This is Probable GTP-binding protein EngB from Finegoldia magna (strain ATCC 29328 / DSM 20472 / WAL 2508) (Peptostreptococcus magnus).